Here is a 173-residue protein sequence, read N- to C-terminus: Co-chaperone protein HscB homolog (173 aa).

Residues 5-77 (CHYALFDLQP…PRRARYLLAI (73 aa)) enclose the J domain.

This sequence belongs to the HscB family. As to quaternary structure, interacts with HscA and stimulates its ATPase activity.

Its function is as follows. Co-chaperone involved in the maturation of iron-sulfur cluster-containing proteins. Seems to help targeting proteins to be folded toward HscA. This is Co-chaperone protein HscB homolog from Pseudomonas putida (strain GB-1).